The following is a 282-amino-acid chain: Pantothenate synthetase (282 aa).

30 to 37 (MGYFHEGH) serves as a coordination point for ATP. The active-site Proton donor is His-37. A (R)-pantoate-binding site is contributed by Gln-61. Gln-61 contributes to the beta-alanine binding site. 147-150 (GQKD) serves as a coordination point for ATP. A (R)-pantoate-binding site is contributed by Gln-153. Residues Val-176 and 184 to 187 (LSSR) contribute to the ATP site.

The protein belongs to the pantothenate synthetase family. As to quaternary structure, homodimer.

The protein resides in the cytoplasm. The enzyme catalyses (R)-pantoate + beta-alanine + ATP = (R)-pantothenate + AMP + diphosphate + H(+). Its pathway is cofactor biosynthesis; (R)-pantothenate biosynthesis; (R)-pantothenate from (R)-pantoate and beta-alanine: step 1/1. Its function is as follows. Catalyzes the condensation of pantoate with beta-alanine in an ATP-dependent reaction via a pantoyl-adenylate intermediate. This Maridesulfovibrio salexigens (strain ATCC 14822 / DSM 2638 / NCIMB 8403 / VKM B-1763) (Desulfovibrio salexigens) protein is Pantothenate synthetase.